The sequence spans 488 residues: 3-octaprenyl-4-hydroxybenzoate carboxy-lyase (488 aa).

N172 provides a ligand contact to Mn(2+). Prenylated FMN-binding positions include 175-177 (IYR), 189-191 (RWL), and 194-195 (RG). Residue E238 coordinates Mn(2+). Catalysis depends on D287, which acts as the Proton donor.

Belongs to the UbiD family. Homohexamer. It depends on prenylated FMN as a cofactor. Mn(2+) is required as a cofactor.

It is found in the cell membrane. It carries out the reaction a 4-hydroxy-3-(all-trans-polyprenyl)benzoate + H(+) = a 2-(all-trans-polyprenyl)phenol + CO2. It participates in cofactor biosynthesis; ubiquinone biosynthesis. In terms of biological role, catalyzes the decarboxylation of 3-octaprenyl-4-hydroxy benzoate to 2-octaprenylphenol, an intermediate step in ubiquinone biosynthesis. The chain is 3-octaprenyl-4-hydroxybenzoate carboxy-lyase from Hahella chejuensis (strain KCTC 2396).